The primary structure comprises 237 residues: MPVKKKRKSPGVAAAVAEDGGLKKCKISSYCRSQPPARLISGEEHFSSKKCLAWFYEYAGPDEVVGPEGMEKFCEDIGVEPENIIMLVLAWKLEAESMGFFTKEEWLKGMTSLQCDCTEKLQNKFDFLRSQLNDISSFKNIYRYAFDFARDKDQRSLDIDTAKSMLALLLGRTWPLFSVFYQYLEQSKYRVMNKDQWYNVLEFSRTVHADLSNYDEDGAWPVLLDEFVEWQKVRQTS.

Phosphoserine occurs at positions 9, 41, and 48. A DCUN1 domain is found at 46–232; sequence FSSKKCLAWF…LLDEFVEWQK (187 aa).

As to quaternary structure, part of a complex that contains DCUN1D5, CUL1 and RBX1; this interaction is bridged by CUL1. Interacts (via the DCUN1 domain) with the unneddylated cullins: interacts with CUL1, CUL2, CUL3, CUL4A, CUL4B and CUL5; these interactions promote the cullin neddylation and the identity of the cullin dictates the affinity of the interaction. Interacts (via DCUN1 domain) with UBE2M (N-terminally acetylated form) and probably with UBE2F (N-terminally acetylated form). May also interact with regulators or subunits of cullin-RING ligases such as RBX1, RNF7, ELOB and DDB1; these interactions are bridged by cullins. Interacts with CAND1; this interaction is bridged by cullins and strongly inhibits the neddylation of cullins. These CAND-cullin-DCNL complexes can only be neddylated in the presence of a substrate adapter. In terms of processing, phosphorylation at Ser-41 is independent of cullin's interaction. Phosphorylated in response to both TICAM1 and MYD88 dependent Toll-like receptor (TLR) pathway activation. Phosphorylated in response to IL1B stimulation. In terms of tissue distribution, weakly expressed in testis, skin and immune tissues (thymus, spleen and lymph nodes).

The protein resides in the nucleus. The protein localises to the cytoplasm. Its subcellular location is the cytoskeleton. It is found in the spindle. In terms of biological role, contributes to the neddylation of all cullins by transferring NEDD8 from N-terminally acetylated NEDD8-conjugating E2s enzyme to different cullin C-terminal domain-RBX complexes which is necessary for the activation of cullin-RING E3 ubiquitin ligases (CRLs). May play a role in DNA damage response and may participate in cell proliferation and anchorage-independent cell growth. The polypeptide is DCN1-like protein 5 (Homo sapiens (Human)).